Here is a 500-residue protein sequence, read N- to C-terminus: Probable cytochrome P450 514A2 (500 aa).

A helical membrane pass occupies residues 4–24; sequence IYTIILTIIILVLIISIKDLF. Cys-446 serves as a coordination point for heme.

Belongs to the cytochrome P450 family. The cofactor is heme.

The protein resides in the membrane. This is Probable cytochrome P450 514A2 (cyp514A2) from Dictyostelium discoideum (Social amoeba).